The sequence spans 318 residues: Putative olfactory receptor 2W6 (318 aa).

Residues 1-31 (MGFYHVGQAAFELLTSSFILVGFSDRPHLEL) are Extracellular-facing. Residues 32–52 (IVFVVVLIFYLLTLLGNMTIV) form a helical membrane-spanning segment. Residues 53–63 (LLSALDSRLHT) are Cytoplasmic-facing. The helical transmembrane segment at 64 to 84 (PMYFFLANLSFLDMCFTTGSI) threads the bilayer. The Extracellular portion of the chain corresponds to 85–103 (PQMLYNLWGPDKTISYVGC). An intrachain disulfide couples Cys-103 to Cys-185. Residues 104 to 124 (AIQLYFVLALGGVECVLLAVM) form a helical membrane-spanning segment. The Cytoplasmic segment spans residues 125–145 (AYDRYAAVCKPLHYTIIMHPR). Residues 146 to 166 (LCGQLASVAWLSGFGNSLIMA) form a helical membrane-spanning segment. At 167 to 202 (PQTLMLPRCGHRRVDHFLCEMPALIGMACVDTMMLE) the chain is on the extracellular side. A helical membrane pass occupies residues 203–223 (ALAFALAIFIILAPLILILIS). Over 224-245 (YGYVGGTVLRIKSAAGRKKAFN) the chain is Cytoplasmic. The helical transmembrane segment at 246–266 (TCSSHLIVVSLFYGTIIYMYL) threads the bilayer. The Extracellular segment spans residues 267–277 (QPANTYSQDQG). A helical membrane pass occupies residues 278 to 298 (KFLTLFYTIVTPSVNPLIYTL). The Cytoplasmic segment spans residues 299–318 (RNKDVKEAMKKVLGKGSAEI).

The protein belongs to the G-protein coupled receptor 1 family.

It is found in the cell membrane. Odorant receptor. This chain is Putative olfactory receptor 2W6 (OR2W6P), found in Homo sapiens (Human).